Here is a 182-residue protein sequence, read N- to C-terminus: MVKALLVGSKVLIPNVDESRYIYSTGFYGKAIGISKPKGPKDIIRPLELSLIESVYLAKKGLIKVIDKNGEVLEYEKLYEYSSKIINKFDIMYRVYEDLREKGFIVRSGVKYGADFAVYTLGPGLEHAPYVVIAVDIDEEITPHELLSFGRVSHSTRKRLVLALVDRKSESVRYIMFKWVKM.

Residues Tyr-119, His-127, and Lys-158 contribute to the active site.

Belongs to the tRNA-intron endonuclease family. Archaeal short subfamily. Homotetramer; although the tetramer contains four active sites, only two participate in the cleavage. Therefore, it should be considered as a dimer of dimers.

It catalyses the reaction pretRNA = a 3'-half-tRNA molecule with a 5'-OH end + a 5'-half-tRNA molecule with a 2',3'-cyclic phosphate end + an intron with a 2',3'-cyclic phosphate and a 5'-hydroxyl terminus.. Its function is as follows. Endonuclease that removes tRNA introns. Cleaves pre-tRNA at the 5'- and 3'-splice sites to release the intron. The products are an intron and two tRNA half-molecules bearing 2',3' cyclic phosphate and 5'-OH termini. Recognizes a pseudosymmetric substrate in which 2 bulged loops of 3 bases are separated by a stem of 4 bp. In Saccharolobus islandicus (strain M.14.25 / Kamchatka #1) (Sulfolobus islandicus), this protein is tRNA-splicing endonuclease.